Reading from the N-terminus, the 269-residue chain is Small ribosomal subunit protein uS2 (269 aa).

Residues 235 to 269 (FDAKNPLKPQNYNTLNKRPYQDSPRKPSYQNQNQR) are disordered.

This sequence belongs to the universal ribosomal protein uS2 family.

The sequence is that of Small ribosomal subunit protein uS2 from Aster yellows witches'-broom phytoplasma (strain AYWB).